A 432-amino-acid chain; its full sequence is Trigger factor (432 aa).

The 86-residue stretch at 161–246 (EDRVTLDFTG…LKKVEERELP (86 aa)) folds into the PPIase FKBP-type domain.

This sequence belongs to the FKBP-type PPIase family. Tig subfamily.

It localises to the cytoplasm. The catalysed reaction is [protein]-peptidylproline (omega=180) = [protein]-peptidylproline (omega=0). Functionally, involved in protein export. Acts as a chaperone by maintaining the newly synthesized protein in an open conformation. Functions as a peptidyl-prolyl cis-trans isomerase. This chain is Trigger factor, found in Salmonella arizonae (strain ATCC BAA-731 / CDC346-86 / RSK2980).